A 240-amino-acid chain; its full sequence is Lectin (240 aa).

Mn(2+) is bound by residues Glu-127 and Asp-129. Ca(2+) contacts are provided by Asp-129, Tyr-131, Asn-133, and Asp-138. Mn(2+) contacts are provided by Asp-138 and His-143.

It belongs to the leguminous lectin family. As to quaternary structure, heterotetramer of two alpha and two beta chains; disulfide bond linked.

Functionally, binds preferentially to oligosaccharides bearing the sequence Man-alpha-1-&gt;2 Man-alpha-1-&gt;6 Man-alpha-1-&gt;6Man found in early steps of glycoprotein processing in the endoplasmic reticulum. It binds weakly to highly processed oligosaccharide structures. This Leucomphalos mildbraedii (Bowringia mildbraedii) protein is Lectin.